A 75-amino-acid polypeptide reads, in one-letter code: UPF0235 protein MSMEG_3845 (75 aa).

Belongs to the UPF0235 family.

This Mycolicibacterium smegmatis (strain ATCC 700084 / mc(2)155) (Mycobacterium smegmatis) protein is UPF0235 protein MSMEG_3845.